The primary structure comprises 431 residues: NADH-quinone oxidoreductase subunit F (431 aa).

54–63 contacts NAD(+); that stretch reads GRGGAGFPTG. Residue 167–214 coordinates FMN; sequence GAGAYICGEETALLESLEGKKGMPRMKPPFPAGSGLYGCPTTVNNVES. The [4Fe-4S] cluster site is built by Cys346, Cys349, Cys352, and Cys392.

Belongs to the complex I 51 kDa subunit family. FMN is required as a cofactor. Requires [4Fe-4S] cluster as cofactor.

It carries out the reaction a quinone + NADH + 5 H(+)(in) = a quinol + NAD(+) + 4 H(+)(out). NDH-1 shuttles electrons from NADH, via FMN and iron-sulfur (Fe-S) centers, to quinones in the respiratory chain. The immediate electron acceptor for the enzyme in this species is believed to be ubiquinone. Couples the redox reaction to proton translocation (for every two electrons transferred, four hydrogen ions are translocated across the cytoplasmic membrane), and thus conserves the redox energy in a proton gradient. This is NADH-quinone oxidoreductase subunit F (nuoF) from Rhodobacter capsulatus (Rhodopseudomonas capsulata).